The primary structure comprises 863 residues: Leucine-rich repeat and death domain-containing protein 1 (863 aa).

Disordered regions lie at residues 1–37 (MSEKEGMSEELEDTISQFRKESRSQSVKEPGFIKETS) and 51–100 (SSNQ…SQSL). The segment covering 88–100 (SETSTRTETSQSL) has biased composition (low complexity). LRR repeat units follow at residues 143–166 (CKDNFTVNLEAKGLQEFPKDILKI), 167–189 (KYVKHLYLDKNQIKTFQGADSGD), 190–213 (LLGLEILSLQENGLSSLPSEIQLL), 214–236 (HNLRILNVSHNHISHIPKEISQL), 238–259 (NIRQLFFYNNYIENFPSDLECL), 260–282 (GNLEILSLGKNKLRHIPDTLPSL), 284–305 (YLRVLNLEYNQLTIFPKALCFL), 306–328 (PKLISLDLTGNLISSLPKEIREL), 329–351 (KNLETLLLDHNKLTFLAVEIFQL), 353–374 (KIKELQLADNKLEVISHKIENF), 375–397 (RELRILILDKNLLKNIPEKICCC), 398–420 (AMLECLTLSDNKLTELPKNIHKL), 422–443 (NLRKLHVNRNNMVKITDSISHL), 445–466 (NICSLEFSGNIIAGIPIEIKNC), 468–489 (KIIKIELNYNKIMYFPLGLCAL), 490–513 (DSLYYLSVNGNYISEIPADISFSK), 515–535 (LLHLELSENKLLIFSEHFCSL), 536–558 (INLKYLDLGKNQIKKIPASISNM), 560–581 (SLHVLILCCNKFETFPRELCTL), 582–604 (ENLRVLDLSENQLQKISSDICNL), 606–627 (RIQKLNFSSNQFIHFPIELCQL), 630–653 (LEQLNISQIKGRKLTRLPGELSNM), 654–676 (TQLKELDISNNAIREIPRNIGEL), 678–699 (NLVSLHAYNNQISYIPPSLLSL), 700–722 (NDLQQLNLSGNNLTALPSAIYNL), and 724–745 (SLKEINFDDNPLLRPPMEICKG). Residues 767 to 855 (EKIFKIVANN…EIMDKITALN (89 aa)) form the Death domain. The LRR 27 repeat unit spans residues 856–863 (LFTRAIKF).

The polypeptide is Leucine-rich repeat and death domain-containing protein 1 (LRRD1) (Macaca fascicularis (Crab-eating macaque)).